A 143-amino-acid polypeptide reads, in one-letter code: Putative pre-16S rRNA nuclease (143 aa).

Belongs to the YqgF nuclease family.

Its subcellular location is the cytoplasm. Could be a nuclease involved in processing of the 5'-end of pre-16S rRNA. This Lactococcus lactis subsp. cremoris (strain SK11) protein is Putative pre-16S rRNA nuclease.